A 323-amino-acid chain; its full sequence is Serine/threonine-protein phosphatase PP1-gamma catalytic subunit B (323 aa).

Residues Asp-64, His-66, Asp-92, and Asn-124 each coordinate Mn(2+). His-125 functions as the Proton donor in the catalytic mechanism. Mn(2+) is bound by residues His-173 and His-248. The segment at 301-323 (KKKPNASRPVTPPRGIITKQAKK) is disordered.

Belongs to the PPP phosphatase family. PP-1 subfamily. As to quaternary structure, PP1 comprises a catalytic subunit, ppp1c1, ppp1cb or ppp1cc, which is folded into its native form by inhibitor 2 and glycogen synthetase kinase 3, and then is complexed to one or several targeting or regulatory subunits. It depends on Mn(2+) as a cofactor.

It localises to the cytoplasm. The protein resides in the nucleus. Its subcellular location is the cleavage furrow. It is found in the nucleolus. The protein localises to the nucleoplasm. It localises to the chromosome. The protein resides in the centromere. Its subcellular location is the kinetochore. It is found in the nucleus speckle. The protein localises to the midbody. It localises to the mitochondrion. The enzyme catalyses O-phospho-L-seryl-[protein] + H2O = L-seryl-[protein] + phosphate. It catalyses the reaction O-phospho-L-threonyl-[protein] + H2O = L-threonyl-[protein] + phosphate. Protein phosphatase that associates with over 200 regulatory proteins to form highly specific holoenzymes which dephosphorylate hundreds of biological targets. Protein phosphatase 1 (PP1) is essential for cell division, and participates in the regulation of glycogen metabolism, muscle contractility and protein synthesis. Promotes nuclear envelope reassembly by targeting nuclear membrane vesicles to chromatin at the end of mitosis. Acts by dephosphorylating membrane proteins such as lamin B receptor (lbr) to regulate the binding of membrane proteins to chromatin. This chain is Serine/threonine-protein phosphatase PP1-gamma catalytic subunit B (ppp1cc-b), found in Xenopus laevis (African clawed frog).